Here is a 294-residue protein sequence, read N- to C-terminus: Acetyl-coenzyme A carboxylase carboxyl transferase subunit beta (294 aa).

In terms of domain architecture, CoA carboxyltransferase N-terminal spans 29–294 (LWEKCPECGQ…TQVVKLQTNA (266 aa)). Residues Cys-33, Cys-36, Cys-52, and Cys-55 each coordinate Zn(2+). The segment at 33–55 (CPECGQVVYRKDLIDNCSVCSNC) adopts a C4-type zinc-finger fold.

This sequence belongs to the AccD/PCCB family. As to quaternary structure, acetyl-CoA carboxylase is a heterohexamer composed of biotin carboxyl carrier protein (AccB), biotin carboxylase (AccC) and two subunits each of ACCase subunit alpha (AccA) and ACCase subunit beta (AccD). Zn(2+) is required as a cofactor.

It is found in the cytoplasm. The catalysed reaction is N(6)-carboxybiotinyl-L-lysyl-[protein] + acetyl-CoA = N(6)-biotinyl-L-lysyl-[protein] + malonyl-CoA. It participates in lipid metabolism; malonyl-CoA biosynthesis; malonyl-CoA from acetyl-CoA: step 1/1. In terms of biological role, component of the acetyl coenzyme A carboxylase (ACC) complex. Biotin carboxylase (BC) catalyzes the carboxylation of biotin on its carrier protein (BCCP) and then the CO(2) group is transferred by the transcarboxylase to acetyl-CoA to form malonyl-CoA. This chain is Acetyl-coenzyme A carboxylase carboxyl transferase subunit beta, found in Prochlorococcus marinus (strain NATL2A).